Consider the following 274-residue polypeptide: 2,3,4,5-tetrahydropyridine-2,6-dicarboxylate N-succinyltransferase (274 aa).

Substrate-binding residues include arginine 104 and aspartate 141.

It belongs to the transferase hexapeptide repeat family. As to quaternary structure, homotrimer.

The protein resides in the cytoplasm. The catalysed reaction is (S)-2,3,4,5-tetrahydrodipicolinate + succinyl-CoA + H2O = (S)-2-succinylamino-6-oxoheptanedioate + CoA. It participates in amino-acid biosynthesis; L-lysine biosynthesis via DAP pathway; LL-2,6-diaminopimelate from (S)-tetrahydrodipicolinate (succinylase route): step 1/3. The polypeptide is 2,3,4,5-tetrahydropyridine-2,6-dicarboxylate N-succinyltransferase (Escherichia coli O127:H6 (strain E2348/69 / EPEC)).